We begin with the raw amino-acid sequence, 380 residues long: Omega-3 fatty acid desaturase, endoplasmic reticulum (380 aa).

The helical transmembrane segment at 59–78 (VLVVTALAASAISFNSWFFW) threads the bilayer. The short motif at 97 to 101 (HDCGH) is the Histidine box-1 element. The Histidine box-2 signature appears at 133-137 (HRTHH). The next 2 helical transmembrane spans lie at 208 to 231 (GVVTSTLCWGIVLSVLLYLSLTIG) and 238 to 256 (LYGVPYLIFVMWLDFVTYL). A Histidine box-3 motif is present at residues 300–304 (HVIHH).

This sequence belongs to the fatty acid desaturase type 1 family.

The protein resides in the endoplasmic reticulum membrane. Its pathway is lipid metabolism; polyunsaturated fatty acid biosynthesis. Functionally, microsomal (ER) omega-3 fatty acid desaturase introduces the third double bond in the biosynthesis of 18:3 fatty acids, important constituents of plant membranes. It is thought to use cytochrome b5 as an electron donor and to act on fatty acids esterified to phosphatidylcholine and, possibly, other phospholipids. In Vigna radiata var. radiata (Mung bean), this protein is Omega-3 fatty acid desaturase, endoplasmic reticulum (ARG1).